Here is a 334-residue protein sequence, read N- to C-terminus: Phosphate acyltransferase (334 aa).

It belongs to the PlsX family. Homodimer. Probably interacts with PlsY.

It is found in the cytoplasm. The enzyme catalyses a fatty acyl-[ACP] + phosphate = an acyl phosphate + holo-[ACP]. The protein operates within lipid metabolism; phospholipid metabolism. Catalyzes the reversible formation of acyl-phosphate (acyl-PO(4)) from acyl-[acyl-carrier-protein] (acyl-ACP). This enzyme utilizes acyl-ACP as fatty acyl donor, but not acyl-CoA. The polypeptide is Phosphate acyltransferase (Mycoplasma capricolum subsp. capricolum (strain California kid / ATCC 27343 / NCTC 10154)).